A 1445-amino-acid polypeptide reads, in one-letter code: MENSLGCVWVPKLAFVLFGASLLSAHLQVTGFQIKPFTSLHFVSEPSDAVTMRGGNVLLNCSAESDRGVPVIKWKKDGLILALGMDDRKQQLPNGSLLIQNILHSRHHKPDEGLYQCEASLGDSGSIISRTAKVMVAGPLRFLSQTESITAFMGDTVLLKCEVIGDPMPTIHWQKNQQDLNPIPGDSRVVVLPSGALQISRLQPGDSGVYRCSARNPASTRTGNEAEVRILSDPGLHRQLYFLQRPSNVIAIEGKDAVLECCVSGYPPPSFTWLRGEEVIQLRSKKYSLLGGSNLLISNVTDDDSGTYTCVVTYKNENISASAELTVLVPPWFLNHPSNLYAYESMDIEFECAVSGKPVPTVNWMKNGDVVIPSDYFQIVGGSNLRILGVVKSDEGFYQCVAENEAGNAQSSAQLIVPKPAIPSSSILPSAPRDVVPVLVSSRFVRLSWRPPAEAKGNIQTFTVFFSREGDNRERALNTTQPGSLQLTVGNLKPEAMYTFRVVAYNEWGPGESSQPIKVATQPELQVPGPVENLHAVSASPTSILITWEPPAYANGPVQGYRLFCTEVSTGKEQNIEVDGLSYKLEGLKKFTEYTLRFLAYNRYGPGVSTDDITVVTLSDVPSAPPQNVSLEVVNSRSIKVSWLPPPSGTQNGFITGYKIRHRKTTRRGEMETLEPNNLWYLFTGLEKGSQYSFQVSAMTVNGTGPPSNWYTAETPENDLDESQVPDQPSSLHVRPQTNCIIMSWTPPLNPNIVVRGYIIGYGVGSPYAETVRVDSKQRYYSIERLESSSHYVISLKAFNNAGEGVPLYESATTRSITDPTDPVDYYPLLDDFPTSGPDVSTPMLPPVGVQAVALTHEAVRVSWADNSVPKNQKTSDVRLYTVRWRTSFSASAKYKSEDTTSLSYTATGLKPNTMYEFSVMVTKNRRSSTWSMTAHATTYEAAPTSAPKDLTVITREGKPRAVIVSWQPPLEANGKITAYILFYTLDKNIPIDDWIMETISGDRLTHQIMDLSLDTMYYFRIQARNAKGVGPLSDPILFRTLKVEHPDKMANDQGRHGDGGYWPVDTNLIDRSTLNEPPIGQMHPPHGSVTPQKNSNLLVITVVTVGVLTVLVVVIVAVICTRRSSAQQRKKRATHSASKRKGSQKDLRPPDLWIHHEEMEMKNIEKPAGTDPAGRGSPIQSCQDLTPVSHSQSESQMGSKSASHSGQDTEEAGSSMSTLERSLAARRATRTKLMIPMEAQSNNPAVVSAIPVPTLESAQYPGILPSPTCGYPHPQFTLRPVPFPTLSVDRGFGAGRTVSEGPTAQQQPMLPPAQPEHPSSEEAPSRTIPTACVRPTHPLRSFANPLLPPPMSAIEPKVPYTPLLSQPGPTLPKTHVKTASLGLAGKARSPLLPVSVPTAPEVSEESHKPTEDPASVYEQDDLSEQMASLEGLMKQLNAITGSAF.

Residues 1-25 (MENSLGCVWVPKLAFVLFGASLLSA) form the signal peptide. Ig-like C2-type domains are found at residues 26–135 (HLQV…AKVM), 139–229 (PLRF…AEVR), 234–326 (PGLH…AELT), and 331–416 (PWFL…AQLI). N-linked (GlcNAc...) asparagine glycosylation is found at Asn-60 and Asn-94. Cystine bridges form between Cys-61–Cys-117, Cys-161–Cys-212, and Cys-261–Cys-310. N-linked (GlcNAc...) asparagine glycosylation is found at Asn-299 and Asn-318. A disulfide bridge connects residues Cys-352 and Cys-400. Fibronectin type-III domains follow at residues 431–524 (APRD…TQPE), 530–620 (PVEN…TLSD), 625–718 (PPQN…TPEN), 728–821 (QPSS…TDPT), 846–942 (PPVG…TYEA), and 947–1044 (APKD…TLKV). The N-linked (GlcNAc...) asparagine glycan is linked to Asn-478. 2 N-linked (GlcNAc...) asparagine glycosylation sites follow: Asn-628 and Asn-702. The chain crosses the membrane as a helical span at residues 1100–1120 (VITVVTVGVLTVLVVVIVAVI). 2 disordered regions span residues 1126 to 1152 (SAQQ…RPPD) and 1167 to 1220 (KPAG…MSTL). Basic residues predominate over residues 1129 to 1143 (QRKKRATHSASKRKG). Ser-1178 carries the post-translational modification Phosphoserine; by MAPK1. Residues 1179-1220 (PIQSCQDLTPVSHSQSESQMGSKSASHSGQDTEEAGSSMSTL) are compositionally biased toward polar residues. The residue at position 1187 (Thr-1187) is a Phosphothreonine; by MAPK1. Ser-1267 bears the Phosphoserine; by MAPK1 mark. Disordered regions lie at residues 1292–1327 (GFGA…APSR) and 1392–1417 (LLPV…PASV).

The protein belongs to the immunoglobulin superfamily. DCC family. As to quaternary structure, interacts with the cytoplasmic part of UNC5A, UNC5B and UNC5C. Interacts with DSCAM. Interacts with PTK2/FAK1. Interacts with MYO10. Interacts with MAPK1. Interacts with NTN1. Interacts with CBLN4; this interaction can be competed by NTN1. Interacts with SIAH1 and SIAH2. Ubiquitinated; mediated by SIAH1 or SIAH2 and leading to its subsequent proteasomal degradation. As to expression, detected in embryonic spinal cord, predominantly in axons of commissural neurons (at protein level). Detected in embryonic spinal cord.

It is found in the membrane. In terms of biological role, receptor for netrin required for axon guidance. Mediates axon attraction of neuronal growth cones in the developing nervous system upon ligand binding. Its association with UNC5 proteins may trigger signaling for axon repulsion. It also acts as a dependence receptor required for apoptosis induction when not associated with netrin ligand. Implicated as a tumor suppressor gene. This chain is Netrin receptor DCC (Dcc), found in Rattus norvegicus (Rat).